Here is a 487-residue protein sequence, read N- to C-terminus: Inosine-5'-monophosphate dehydrogenase (487 aa).

2 consecutive CBS domains span residues 93–152 (VVTE…VTAV) and 153–214 (MTPK…CKDE). Residues Asp-248, 248 to 250 (DSS), and 298 to 300 (GIG) contribute to the NAD(+) site. K(+) is bound by residues Gly-300 and Gly-302. Ser-303 lines the IMP pocket. Cys-305 contacts K(+). Cys-305 (thioimidate intermediate) is an active-site residue. Residues 338 to 340 (DGG), 361 to 362 (GS), and 385 to 389 (YRGMG) contribute to the IMP site. Arg-401 (proton acceptor) is an active-site residue. Position 415 (Glu-415) interacts with IMP. 3 residues coordinate K(+): Glu-469, Ser-470, and His-471.

It belongs to the IMPDH/GMPR family. Homotetramer. Requires K(+) as cofactor.

It carries out the reaction IMP + NAD(+) + H2O = XMP + NADH + H(+). It functions in the pathway purine metabolism; XMP biosynthesis via de novo pathway; XMP from IMP: step 1/1. Its activity is regulated as follows. Mycophenolic acid (MPA) is a non-competitive inhibitor that prevents formation of the closed enzyme conformation by binding to the same site as the amobile flap. In contrast, mizoribine monophosphate (MZP) is a competitive inhibitor that induces the closed conformation. MPA is a potent inhibitor of mammalian IMPDHs but a poor inhibitor of the bacterial enzymes. MZP is a more potent inhibitor of bacterial IMPDH. Its function is as follows. Catalyzes the conversion of inosine 5'-phosphate (IMP) to xanthosine 5'-phosphate (XMP), the first committed and rate-limiting step in the de novo synthesis of guanine nucleotides, and therefore plays an important role in the regulation of cell growth. This Yersinia pestis protein is Inosine-5'-monophosphate dehydrogenase.